We begin with the raw amino-acid sequence, 121 residues long: RING-box protein HRT1 (121 aa).

A disordered region spans residues 1–31 (MSNEVDRMDVDEDESQNIAQSSNQSAPVETK). At Ser-15 the chain carries Phosphoserine. Over residues 16 to 26 (QNIAQSSNQSA) the composition is skewed to low complexity. Positions 55, 58, 66, 69, 81, 88, 90, 93, 95, 107, and 110 each coordinate Zn(2+). An RING-type zinc finger spans residues 55-111 (CAICRNHIMEPCIECQPKAMTDTDNECVAAWGVCNHAFHLHCINKWIKTRDACPLDN).

The protein belongs to the RING-box family. Component of multiple cullin-RING ligases (CRLs) composed of 4 subunits: the RING protein HRT1, a cullin, a linker protein, and one of many alternative substrate receptors. Component of SCF E3 ubiquitin ligase complexes containing the cullin CDC53, the linker protein SKP1/CBF3D, and substrate receptors containing F-box motifs like DAS1 or GRR1. Component of RTT101(MMS1) E3 ubiquitin ligase complexes containing the cullin RTT101, the linker protein MMS1, and substrate receptors belonging to a protein family described as DCAF (DDB1- and CUL4-associated factor) like MMS22. Component of CRL3 E3 ubiquitin ligase complexes containing the cullin CUL3, the linker protein ELC1, and substrate receptors containing SOCS-box motifs like ELA1. Interacts with CDC53, CUL3, RTT101, CDC4 and CDC34/UBC3.

It localises to the cytoplasm. The protein localises to the nucleus. It participates in protein modification; protein ubiquitination. In terms of biological role, core component of multiple cullin-RING-based E3 ubiquitin-protein ligase complexes (CRLs), which mediate the ubiquitination of target proteins. Recruits the E2 ubiquitin-conjugating enzyme CDC34/UBC3 to the complex and brings it into close proximity to the substrate. Also stimulates CDC34/UBC3 autoubiquitination and promotes the neddylation of CDC53 and RTT101. Component of the SCF(CDC4) ubiquitin ligase required for ubiquitination of the cyclin-dependent kinase inhibitor SIC1 and for the G1-to-S phase transition. Component of the RTT101(MMS1-MMS22) ubiquitin ligase that promotes fork progression through damaged DNA or natural pause sites. Component of the CRL3(ELA1) ubiquitin ligase required for ubiquitination of RPB1, the largest subunit of RNA polymerase II (Pol II), which targets Pol II for proteasomal degradation in DNA-damaged cells. This Saccharomyces cerevisiae (strain ATCC 204508 / S288c) (Baker's yeast) protein is RING-box protein HRT1 (HRT1).